Consider the following 206-residue polypeptide: Probable glutathione S-transferase 7 (206 aa).

The GST N-terminal domain maps to 2–79; that stretch reads VHYKVSYFPI…YLARQFGING (78 aa). Residues Tyr-8, Trp-39, Lys-43, 49–51, and 63–64 contribute to the glutathione site; these read GQL and QS. Residues 81–206 form the GST C-terminal domain; that stretch reads CAWEEAQVNS…WLETRPVTPF (126 aa).

This sequence belongs to the GST superfamily. Sigma family.

The catalysed reaction is RX + glutathione = an S-substituted glutathione + a halide anion + H(+). In terms of biological role, conjugation of reduced glutathione to a wide number of exogenous and endogenous hydrophobic electrophiles. May play a role in the detoxification of reactive oxygen species produced during pathogenic bacterial infection. The polypeptide is Probable glutathione S-transferase 7 (gst-7) (Caenorhabditis elegans).